We begin with the raw amino-acid sequence, 118 residues long: Small ribosomal subunit protein uS13 (118 aa).

The disordered stretch occupies residues 94–118; the sequence is SLPLRGQRTKTNARTRKGPRKPIRK.

The protein belongs to the universal ribosomal protein uS13 family. In terms of assembly, part of the 30S ribosomal subunit. Forms a loose heterodimer with protein S19. Forms two bridges to the 50S subunit in the 70S ribosome.

Located at the top of the head of the 30S subunit, it contacts several helices of the 16S rRNA. In the 70S ribosome it contacts the 23S rRNA (bridge B1a) and protein L5 of the 50S subunit (bridge B1b), connecting the 2 subunits; these bridges are implicated in subunit movement. Contacts the tRNAs in the A and P-sites. The polypeptide is Small ribosomal subunit protein uS13 (Shewanella frigidimarina (strain NCIMB 400)).